The following is a 261-amino-acid chain: Cytochrome c oxidase subunit 3 (261 aa).

The Mitochondrial matrix portion of the chain corresponds to 1-15 (MAHQAHAYHMVDPSP). A helical membrane pass occupies residues 16–34 (WPLTGAIAALLLTSGTAVW). Over 35–40 (FHFHSL) the chain is Mitochondrial intermembrane. The helical transmembrane segment at 41-66 (TLLTLGNILLLLTMYQWWRDIIREGT) threads the bilayer. Residues 67–72 (FQGHHT) are Mitochondrial matrix-facing. The chain crosses the membrane as a helical span at residues 73 to 105 (PPVQKGLRYGMILFITSEVFFFLGFFWAFYHAS). At 106–128 (LAPTPELGGCWPPAGITTLDPFE) the chain is on the mitochondrial intermembrane side. The helical transmembrane segment at 129-152 (VPLLNTAVLLASGVTVTWAHHSIM) threads the bilayer. Residues 153 to 155 (EGE) are Mitochondrial matrix-facing. The chain crosses the membrane as a helical span at residues 156 to 183 (RKQTIQALTLTILLGFYFTFLQGMEYYE). Residues 184–190 (APFTIAD) are Mitochondrial intermembrane-facing. A helical transmembrane segment spans residues 191–223 (GVYGSTFFVATGFHGLHVIIGSTFLAVCLLRQV). The Mitochondrial matrix portion of the chain corresponds to 224–232 (QYHFTSEHH). The chain crosses the membrane as a helical span at residues 233-256 (FGFEAAAWYWHFVDVVWLFLYVSI). At 257-261 (YWWGS) the chain is on the mitochondrial intermembrane side.

Belongs to the cytochrome c oxidase subunit 3 family. As to quaternary structure, component of the cytochrome c oxidase (complex IV, CIV), a multisubunit enzyme composed of 14 subunits. The complex is composed of a catalytic core of 3 subunits MT-CO1, MT-CO2 and MT-CO3, encoded in the mitochondrial DNA, and 11 supernumerary subunits COX4I, COX5A, COX5B, COX6A, COX6B, COX6C, COX7A, COX7B, COX7C, COX8 and NDUFA4, which are encoded in the nuclear genome. The complex exists as a monomer or a dimer and forms supercomplexes (SCs) in the inner mitochondrial membrane with NADH-ubiquinone oxidoreductase (complex I, CI) and ubiquinol-cytochrome c oxidoreductase (cytochrome b-c1 complex, complex III, CIII), resulting in different assemblies (supercomplex SCI(1)III(2)IV(1) and megacomplex MCI(2)III(2)IV(2)).

The protein resides in the mitochondrion inner membrane. It catalyses the reaction 4 Fe(II)-[cytochrome c] + O2 + 8 H(+)(in) = 4 Fe(III)-[cytochrome c] + 2 H2O + 4 H(+)(out). Its function is as follows. Component of the cytochrome c oxidase, the last enzyme in the mitochondrial electron transport chain which drives oxidative phosphorylation. The respiratory chain contains 3 multisubunit complexes succinate dehydrogenase (complex II, CII), ubiquinol-cytochrome c oxidoreductase (cytochrome b-c1 complex, complex III, CIII) and cytochrome c oxidase (complex IV, CIV), that cooperate to transfer electrons derived from NADH and succinate to molecular oxygen, creating an electrochemical gradient over the inner membrane that drives transmembrane transport and the ATP synthase. Cytochrome c oxidase is the component of the respiratory chain that catalyzes the reduction of oxygen to water. Electrons originating from reduced cytochrome c in the intermembrane space (IMS) are transferred via the dinuclear copper A center (CU(A)) of subunit 2 and heme A of subunit 1 to the active site in subunit 1, a binuclear center (BNC) formed by heme A3 and copper B (CU(B)). The BNC reduces molecular oxygen to 2 water molecules using 4 electrons from cytochrome c in the IMS and 4 protons from the mitochondrial matrix. In Oncorhynchus mykiss (Rainbow trout), this protein is Cytochrome c oxidase subunit 3 (mt-co3).